The sequence spans 38 residues: Photosystem II reaction center protein L (38 aa).

The helical transmembrane segment at 17-37 (SLYWGLLLIFVLAILFSNYIF) threads the bilayer.

Belongs to the PsbL family. PSII is composed of 1 copy each of membrane proteins PsbA, PsbB, PsbC, PsbD, PsbE, PsbF, PsbH, PsbI, PsbJ, PsbK, PsbL, PsbM, PsbT, PsbX, PsbY, PsbZ, Psb30/Ycf12, at least 3 peripheral proteins of the oxygen-evolving complex and a large number of cofactors. It forms dimeric complexes.

The protein resides in the plastid. It localises to the chloroplast thylakoid membrane. In terms of biological role, one of the components of the core complex of photosystem II (PSII). PSII is a light-driven water:plastoquinone oxidoreductase that uses light energy to abstract electrons from H(2)O, generating O(2) and a proton gradient subsequently used for ATP formation. It consists of a core antenna complex that captures photons, and an electron transfer chain that converts photonic excitation into a charge separation. This subunit is found at the monomer-monomer interface and is required for correct PSII assembly and/or dimerization. This chain is Photosystem II reaction center protein L, found in Chlorokybus atmophyticus (Soil alga).